Reading from the N-terminus, the 302-residue chain is Probable protein ABIL4 (302 aa).

Disordered stretches follow at residues 151-179 (PSTG…YPSA) and 220-256 (LLGK…QPGF). A compositionally biased stretch (polar residues) spans 161 to 170 (ARLQTDNGQD).

This sequence belongs to the ABI family. In terms of assembly, binds SCAR.

The protein resides in the cytoplasm. The protein localises to the cytoskeleton. Its function is as follows. Involved in regulation of actin and microtubule organization. Part of a WAVE complex that activates the Arp2/3 complex. The polypeptide is Probable protein ABIL4 (Oryza sativa subsp. japonica (Rice)).